We begin with the raw amino-acid sequence, 111 residues long: Ribonuclease P protein component (111 aa).

The protein belongs to the RnpA family. Consists of a catalytic RNA component (M1 or rnpB) and a protein subunit.

It carries out the reaction Endonucleolytic cleavage of RNA, removing 5'-extranucleotides from tRNA precursor.. RNaseP catalyzes the removal of the 5'-leader sequence from pre-tRNA to produce the mature 5'-terminus. It can also cleave other RNA substrates such as 4.5S RNA. The protein component plays an auxiliary but essential role in vivo by binding to the 5'-leader sequence and broadening the substrate specificity of the ribozyme. The protein is Ribonuclease P protein component of Clostridium botulinum (strain Okra / Type B1).